Reading from the N-terminus, the 65-residue chain is Large ribosomal subunit protein bL35 (65 aa).

Residues M1 to V16 are compositionally biased toward basic residues. Residues M1–Q26 are disordered.

It belongs to the bacterial ribosomal protein bL35 family.

This chain is Large ribosomal subunit protein bL35, found in Azoarcus sp. (strain BH72).